The sequence spans 381 residues: UDP-4-amino-4-deoxy-L-arabinose--oxoglutarate aminotransferase (381 aa).

Lys182 is modified (N6-(pyridoxal phosphate)lysine).

The protein belongs to the DegT/DnrJ/EryC1 family. ArnB subfamily. As to quaternary structure, homodimer. Requires pyridoxal 5'-phosphate as cofactor.

The enzyme catalyses UDP-4-amino-4-deoxy-beta-L-arabinose + 2-oxoglutarate = UDP-beta-L-threo-pentopyranos-4-ulose + L-glutamate. It participates in nucleotide-sugar biosynthesis; UDP-4-deoxy-4-formamido-beta-L-arabinose biosynthesis; UDP-4-deoxy-4-formamido-beta-L-arabinose from UDP-alpha-D-glucuronate: step 2/3. It functions in the pathway bacterial outer membrane biogenesis; lipopolysaccharide biosynthesis. Functionally, catalyzes the conversion of UDP-4-keto-arabinose (UDP-Ara4O) to UDP-4-amino-4-deoxy-L-arabinose (UDP-L-Ara4N). The modified arabinose is attached to lipid A and is required for resistance to polymyxin and cationic antimicrobial peptides. This chain is UDP-4-amino-4-deoxy-L-arabinose--oxoglutarate aminotransferase, found in Proteus mirabilis (strain HI4320).